The chain runs to 374 residues: S-adenosylmethionine:tRNA ribosyltransferase-isomerase (374 aa).

The protein belongs to the QueA family. As to quaternary structure, monomer.

The protein localises to the cytoplasm. The catalysed reaction is 7-aminomethyl-7-carbaguanosine(34) in tRNA + S-adenosyl-L-methionine = epoxyqueuosine(34) in tRNA + adenine + L-methionine + 2 H(+). The protein operates within tRNA modification; tRNA-queuosine biosynthesis. In terms of biological role, transfers and isomerizes the ribose moiety from AdoMet to the 7-aminomethyl group of 7-deazaguanine (preQ1-tRNA) to give epoxyqueuosine (oQ-tRNA). This Prochlorococcus marinus (strain AS9601) protein is S-adenosylmethionine:tRNA ribosyltransferase-isomerase.